A 429-amino-acid polypeptide reads, in one-letter code: Small ribosomal subunit protein mS47 (429 aa).

Positions 141, 166, 189, and 197 each coordinate substrate.

It belongs to the enoyl-CoA hydratase/isomerase family. Mitochondrion-specific ribosomal protein mS47 subfamily. In terms of assembly, component of the mitochondrial small ribosomal subunit (mt-SSU). Mature yeast 74S mitochondrial ribosomes consist of a small (37S) and a large (54S) subunit. The 37S small subunit contains a 15S ribosomal RNA (15S mt-rRNA) and at least 32 different proteins. The 54S large subunit contains a 21S rRNA (21S mt-rRNA) and at least 45 different proteins. mS47/snr1 forms a protuberance of the yeast mitoribosome and retains a solvent-exposed cavity likely capable of accommodating a substrate, in accordance with it being an active enzyme as well as an integral constituent of the mitoribosome.

It localises to the mitochondrion. It carries out the reaction 3-hydroxy-2-methylpropanoyl-CoA + H2O = 3-hydroxy-2-methylpropanoate + CoA + H(+). The protein operates within amino-acid degradation; L-valine degradation. Functionally, component of the mitochondrial ribosome (mitoribosome), a dedicated translation machinery responsible for the synthesis of mitochondrial genome-encoded proteins, including at least some of the essential transmembrane subunits of the mitochondrial respiratory chain. The mitoribosomes are attached to the mitochondrial inner membrane and translation products are cotranslationally integrated into the membrane. mS47/snr1 has enzymatic activity in vitro, and is able to catalyze the specific hydrolysis of 3-hydroxyisobutyryl-CoA (HIBYL-CoA). However, because the turnover rate of mS47/snr1 is only a fraction of that of the homologous mammalian enzyme, the physiological function of this activity remains unclear. Has an indirect role in endocytic membrane trafficking. In Schizosaccharomyces pombe (strain 972 / ATCC 24843) (Fission yeast), this protein is Small ribosomal subunit protein mS47 (snr1).